The chain runs to 258 residues: Imidazole glycerol phosphate synthase subunit HisF (258 aa).

Residues Asp12 and Asp131 contribute to the active site.

It belongs to the HisA/HisF family. As to quaternary structure, heterodimer of HisH and HisF.

The protein localises to the cytoplasm. It catalyses the reaction 5-[(5-phospho-1-deoxy-D-ribulos-1-ylimino)methylamino]-1-(5-phospho-beta-D-ribosyl)imidazole-4-carboxamide + L-glutamine = D-erythro-1-(imidazol-4-yl)glycerol 3-phosphate + 5-amino-1-(5-phospho-beta-D-ribosyl)imidazole-4-carboxamide + L-glutamate + H(+). It participates in amino-acid biosynthesis; L-histidine biosynthesis; L-histidine from 5-phospho-alpha-D-ribose 1-diphosphate: step 5/9. IGPS catalyzes the conversion of PRFAR and glutamine to IGP, AICAR and glutamate. The HisF subunit catalyzes the cyclization activity that produces IGP and AICAR from PRFAR using the ammonia provided by the HisH subunit. The protein is Imidazole glycerol phosphate synthase subunit HisF of Corynebacterium glutamicum (strain R).